Reading from the N-terminus, the 284-residue chain is 2-dehydro-3-deoxyphosphooctonate aldolase (284 aa).

This sequence belongs to the KdsA family.

It localises to the cytoplasm. The enzyme catalyses D-arabinose 5-phosphate + phosphoenolpyruvate + H2O = 3-deoxy-alpha-D-manno-2-octulosonate-8-phosphate + phosphate. It functions in the pathway carbohydrate biosynthesis; 3-deoxy-D-manno-octulosonate biosynthesis; 3-deoxy-D-manno-octulosonate from D-ribulose 5-phosphate: step 2/3. Its pathway is bacterial outer membrane biogenesis; lipopolysaccharide biosynthesis. In Salmonella paratyphi A (strain ATCC 9150 / SARB42), this protein is 2-dehydro-3-deoxyphosphooctonate aldolase.